The primary structure comprises 212 residues: Adenylate kinase (212 aa).

10–15 contacts ATP; it reads GAGKGT. The segment at 30 to 59 is NMP; it reads AIGDIFRTIIKTSTSEAELINNYVRQGELI. AMP contacts are provided by residues R36, 57–59, 85–88, and Q92; these read ELI and GYPR. The LID stretch occupies residues 122–160; the sequence is GRYSCKNCGKIYNRYFLQPKTDNVCDVCGSSTFDYRKDD. R123 serves as a coordination point for ATP. Residues C126 and C129 each coordinate Zn(2+). 132–133 provides a ligand contact to ATP; that stretch reads IY. 2 residues coordinate Zn(2+): C146 and C149. AMP-binding residues include R157 and R168. K196 is a binding site for ATP.

The protein belongs to the adenylate kinase family. Monomer.

It is found in the cytoplasm. The enzyme catalyses AMP + ATP = 2 ADP. It participates in purine metabolism; AMP biosynthesis via salvage pathway; AMP from ADP: step 1/1. Catalyzes the reversible transfer of the terminal phosphate group between ATP and AMP. Plays an important role in cellular energy homeostasis and in adenine nucleotide metabolism. This Rickettsia peacockii (strain Rustic) protein is Adenylate kinase.